The sequence spans 208 residues: Heavy metal-associated isoprenylated plant protein 42 (208 aa).

The HMA domain maps to 6–70; that stretch reads FPICILKMNL…AVAKLGQSPQ (65 aa). Positions 93–116 are disordered; the sequence is ATNKTQDKPSPPAPPVTATTPVET. Cysteine methyl ester is present on cysteine 205. Cysteine 205 carries the S-farnesyl cysteine lipid modification. The propeptide at 206-208 is removed in mature form; the sequence is SIM.

Belongs to the HIPP family.

In terms of biological role, probable heavy-metal-binding protein. This Arabidopsis thaliana (Mouse-ear cress) protein is Heavy metal-associated isoprenylated plant protein 42.